Consider the following 621-residue polypeptide: Transmembrane protein 200C (621 aa).

The interval 12–37 (ARKQDPLRPPSQIPKRKRKAKKRRKN) is disordered. The segment covering 25-36 (PKRKRKAKKRRK) has biased composition (basic residues). Residues 53 to 73 (GLIALCGILVLLVGIAMAVVG) traverse the membrane as a helical segment. A disordered region spans residues 80 to 147 (GTNREGGKQL…RAASPSSSST (68 aa)). Over residues 125–147 (SSSAGAPRSTPPARAASPSSSST) the composition is skewed to low complexity. Residues 167–187 (VFGPLIMGIGIFLFICANAVL) form a helical membrane-spanning segment. Disordered regions lie at residues 284–315 (WPPH…PREP), 347–368 (ASSC…QSTA), and 384–598 (LQGG…FTNK). Residues 290-303 (APSGGRPRGAASPP) are compositionally biased toward low complexity. Basic and acidic residues predominate over residues 405 to 418 (PGERGSQEIPRGEL). A compositionally biased stretch (pro residues) spans 479–490 (RAPPSPEPPPSP). Low complexity-rich tracts occupy residues 491-505 (GSAD…KAAS) and 523-533 (GSSQSDDPSSS). Over residues 586–595 (EQPQPVQRQF) the composition is skewed to polar residues.

It belongs to the TMEM200 family.

It localises to the membrane. This Homo sapiens (Human) protein is Transmembrane protein 200C (TMEM200C).